The sequence spans 142 residues: Hemoglobin subunit theta-1 (142 aa).

The Globin domain maps to 2–142 (ALSAEDRALV…VISALVSEYR (141 aa)). The heme b site is built by His59 and His88.

This sequence belongs to the globin family.

This is Hemoglobin subunit theta-1 (HBQ1) from Homo sapiens (Human).